Consider the following 317-residue polypeptide: Dehydrogenase/reductase SDR family protein 7-like (317 aa).

The Cytoplasmic segment spans residues M1–G10. A helical; Signal-anchor for type II membrane protein transmembrane segment spans residues S11–L31. Residues K32–T317 are Peroxisomal-facing. L52–V76 is an NAD(+) binding site. Substrate is bound at residue S189. Y202 functions as the Proton acceptor in the catalytic mechanism.

The protein belongs to the short-chain dehydrogenases/reductases (SDR) family.

It is found in the peroxisome membrane. Putative oxidoreductase. The polypeptide is Dehydrogenase/reductase SDR family protein 7-like (Anopheles gambiae (African malaria mosquito)).